Reading from the N-terminus, the 126-residue chain is Methylglyoxal synthase (126 aa).

Residues 1–126 form the MGS-like domain; sequence MADRKCLALI…AEQLIDFRRN (126 aa). Residues His-12, Lys-16, 38 to 41, and 59 to 60 contribute to the substrate site; these read TGTT and SG. Asp-65 functions as the Proton donor/acceptor in the catalytic mechanism. His-92 is a substrate binding site.

This sequence belongs to the methylglyoxal synthase family.

The catalysed reaction is dihydroxyacetone phosphate = methylglyoxal + phosphate. Functionally, catalyzes the formation of methylglyoxal from dihydroxyacetone phosphate. This Rhizobium meliloti (strain 1021) (Ensifer meliloti) protein is Methylglyoxal synthase.